Consider the following 491-residue polypeptide: Ketol-acid reductoisomerase (NADP(+)) (491 aa).

The KARI N-terminal Rossmann domain occupies A15–S208. NADP(+)-binding positions include C45 to Q48, R68, R76, S78, and D108 to Q110. Residue H132 is part of the active site. G158 provides a ligand contact to NADP(+). 2 consecutive KARI C-terminal knotted domains span residues S209–Q344 and Y345–M484. Positions 217, 221, 389, and 393 each coordinate Mg(2+). S414 is a binding site for substrate.

The protein belongs to the ketol-acid reductoisomerase family. Requires Mg(2+) as cofactor.

The enzyme catalyses (2R)-2,3-dihydroxy-3-methylbutanoate + NADP(+) = (2S)-2-acetolactate + NADPH + H(+). The catalysed reaction is (2R,3R)-2,3-dihydroxy-3-methylpentanoate + NADP(+) = (S)-2-ethyl-2-hydroxy-3-oxobutanoate + NADPH + H(+). It participates in amino-acid biosynthesis; L-isoleucine biosynthesis; L-isoleucine from 2-oxobutanoate: step 2/4. The protein operates within amino-acid biosynthesis; L-valine biosynthesis; L-valine from pyruvate: step 2/4. Functionally, involved in the biosynthesis of branched-chain amino acids (BCAA). Catalyzes an alkyl-migration followed by a ketol-acid reduction of (S)-2-acetolactate (S2AL) to yield (R)-2,3-dihydroxy-isovalerate. In the isomerase reaction, S2AL is rearranged via a Mg-dependent methyl migration to produce 3-hydroxy-3-methyl-2-ketobutyrate (HMKB). In the reductase reaction, this 2-ketoacid undergoes a metal-dependent reduction by NADPH to yield (R)-2,3-dihydroxy-isovalerate. This is Ketol-acid reductoisomerase (NADP(+)) from Escherichia fergusonii (strain ATCC 35469 / DSM 13698 / CCUG 18766 / IAM 14443 / JCM 21226 / LMG 7866 / NBRC 102419 / NCTC 12128 / CDC 0568-73).